Consider the following 505-residue polypeptide: Glycerol kinase (505 aa).

ADP is bound at residue T14. The ATP site is built by T14, T15, and S16. Sn-glycerol 3-phosphate is bound at residue T14. R18 is an ADP binding site. R84, E85, Y136, and D246 together coordinate sn-glycerol 3-phosphate. Glycerol is bound by residues R84, E85, Y136, D246, and Q247. ADP-binding residues include T268 and G311. Residues T268, G311, Q315, and G412 each coordinate ATP. ADP contacts are provided by G412 and N416.

Belongs to the FGGY kinase family.

It carries out the reaction glycerol + ATP = sn-glycerol 3-phosphate + ADP + H(+). It participates in polyol metabolism; glycerol degradation via glycerol kinase pathway; sn-glycerol 3-phosphate from glycerol: step 1/1. Inhibited by fructose 1,6-bisphosphate (FBP). In terms of biological role, key enzyme in the regulation of glycerol uptake and metabolism. Catalyzes the phosphorylation of glycerol to yield sn-glycerol 3-phosphate. The chain is Glycerol kinase from Vibrio cholerae serotype O1 (strain M66-2).